The sequence spans 147 residues: DNA base-flipping protein (147 aa).

The protein belongs to the MGMT family. ATL subfamily. In terms of assembly, interacts with several proteins, including UvrA, UvrD and the three subunits of the RNA polymerase.

Involved in DNA damage recognition. Binds DNA containing O(6)-methylguanine and larger O(6)-alkylguanine adducts. Binds to the damaged base and flips the base out of the DNA duplex into an extrahelical conformation, which allows processing by repair proteins. Also affects the regulation of gene expression in response to alkylation. The sequence is that of DNA base-flipping protein from Thermus thermophilus (strain ATCC 27634 / DSM 579 / HB8).